A 605-amino-acid polypeptide reads, in one-letter code: Glutamine--fructose-6-phosphate aminotransferase [isomerizing] (605 aa).

The active-site Nucleophile; for GATase activity is the C2. Residues 2–219 (CGIVGVVGSK…DKELVVLTKD (218 aa)) enclose the Glutamine amidotransferase type-2 domain. SIS domains follow at residues 285–424 (IIKG…AEGE) and 457–595 (VADL…VDKP). K600 serves as the catalytic For Fru-6P isomerization activity.

As to quaternary structure, homodimer.

The protein resides in the cytoplasm. It catalyses the reaction D-fructose 6-phosphate + L-glutamine = D-glucosamine 6-phosphate + L-glutamate. Catalyzes the first step in hexosamine metabolism, converting fructose-6P into glucosamine-6P using glutamine as a nitrogen source. The sequence is that of Glutamine--fructose-6-phosphate aminotransferase [isomerizing] from Lactococcus lactis subsp. lactis (strain IL1403) (Streptococcus lactis).